A 293-amino-acid polypeptide reads, in one-letter code: 4-diphosphocytidyl-2-C-methyl-D-erythritol kinase (293 aa).

K10 is an active-site residue. 94-104 lines the ATP pocket; the sequence is PVSAGLAGGSS. Residue D136 is part of the active site.

This sequence belongs to the GHMP kinase family. IspE subfamily.

It catalyses the reaction 4-CDP-2-C-methyl-D-erythritol + ATP = 4-CDP-2-C-methyl-D-erythritol 2-phosphate + ADP + H(+). It participates in isoprenoid biosynthesis; isopentenyl diphosphate biosynthesis via DXP pathway; isopentenyl diphosphate from 1-deoxy-D-xylulose 5-phosphate: step 3/6. In terms of biological role, catalyzes the phosphorylation of the position 2 hydroxy group of 4-diphosphocytidyl-2C-methyl-D-erythritol. In Listeria monocytogenes serovar 1/2a (strain ATCC BAA-679 / EGD-e), this protein is 4-diphosphocytidyl-2-C-methyl-D-erythritol kinase.